A 101-amino-acid polypeptide reads, in one-letter code: Small ribosomal subunit protein uS14 (101 aa).

Positions 1–21 (MAKTSAVEKNKRRRKSVAQQA) are disordered.

Belongs to the universal ribosomal protein uS14 family. Part of the 30S ribosomal subunit. Contacts proteins S3 and S10.

Binds 16S rRNA, required for the assembly of 30S particles and may also be responsible for determining the conformation of the 16S rRNA at the A site. In Agrobacterium fabrum (strain C58 / ATCC 33970) (Agrobacterium tumefaciens (strain C58)), this protein is Small ribosomal subunit protein uS14.